Consider the following 331-residue polypeptide: Glucokinase (331 aa).

ATP is bound at residue 16–21; the sequence is GDIGGT.

The protein belongs to the bacterial glucokinase family.

The protein localises to the cytoplasm. The enzyme catalyses D-glucose + ATP = D-glucose 6-phosphate + ADP + H(+). This is Glucokinase from Pseudomonas aeruginosa (strain LESB58).